The primary structure comprises 1289 residues: DNA-directed RNA polymerase subunit beta (1289 aa).

This sequence belongs to the RNA polymerase beta chain family. The RNAP catalytic core consists of 2 alpha, 1 beta, 1 beta' and 1 omega subunit. When a sigma factor is associated with the core the holoenzyme is formed, which can initiate transcription.

The enzyme catalyses RNA(n) + a ribonucleoside 5'-triphosphate = RNA(n+1) + diphosphate. DNA-dependent RNA polymerase catalyzes the transcription of DNA into RNA using the four ribonucleoside triphosphates as substrates. This Methylacidiphilum infernorum (isolate V4) (Methylokorus infernorum (strain V4)) protein is DNA-directed RNA polymerase subunit beta.